Reading from the N-terminus, the 298-residue chain is Protease HtpX homolog (298 aa).

A run of 2 helical transmembrane segments spans residues 14–34 (VVLL…AGYL) and 39–59 (YAMG…SMIF). Residue H143 coordinates Zn(2+). E144 is a catalytic residue. Position 147 (H147) interacts with Zn(2+). Transmembrane regions (helical) follow at residues 158-178 (IAVA…RMLW) and 197-217 (IITL…ASLI). A Zn(2+)-binding site is contributed by E226.

The protein belongs to the peptidase M48B family. Zn(2+) is required as a cofactor.

The protein localises to the cell membrane. In Streptococcus pyogenes serotype M3 (strain SSI-1), this protein is Protease HtpX homolog.